Reading from the N-terminus, the 332-residue chain is Trace amine-associated receptor 1 (332 aa).

Residues methionine 1–alanine 23 lie on the Extracellular side of the membrane. The N-linked (GlcNAc...) asparagine glycan is linked to asparagine 9. A helical membrane pass occupies residues serine 24–serine 48. Topologically, residues histidine 49–asparagine 58 are cytoplasmic. Residues tryptophan 59 to methionine 80 form a helical membrane-spanning segment. Over valine 81 to cysteine 95 the chain is Extracellular. Residues cysteine 95 and cysteine 181 are joined by a disulfide bond. The chain crosses the membrane as a helical span at residues lysine 96–isoleucine 118. Aspartate 102 serves as a coordination point for 2-phenylethylamine. Residues aspartate 119 to threonine 138 lie on the Cytoplasmic side of the membrane. Residues isoleucine 139–leucine 160 traverse the membrane as a helical segment. The Extracellular portion of the chain corresponds to glutamate 161–lysine 187. The interval glutamine 174–phenylalanine 185 is extracellular Loop 2 (ECL2). A helical membrane pass occupies residues valine 188–tyrosine 210. Over arginine 211–alanine 246 the chain is Cytoplasmic. A helical membrane pass occupies residues alanine 247–leucine 270. The Extracellular portion of the chain corresponds to aspartate 271–asparagine 283. The chain crosses the membrane as a helical span at residues aspartate 284 to phenylalanine 304. Topologically, residues tyrosine 305–leucine 332 are cytoplasmic.

This sequence belongs to the G-protein coupled receptor 1 family. As to expression, widely distributed throughout the brain. Strongly expressed in the mitral cell layer of the olfactory bulb, piriform cortex, the arcuate, motor, and mesencephalic trigeminal nuclei, lateral reticular and hypoglossal nuclei, cerebellar Purkinje cells, and ventral horn of the spinal cord. Moderately expressed in the frontal, entorhinal, and agranular cortices, the ventral pallidum, thalamus, hippocampus, several hypothalamic nuclei, ambiguus, dorsal raphe, and gigantocellular reticular nuclei. Weakly expressed in the septum, basal ganglia, amygdala, myelencephalon, and spinal cord dorsal horn. Particularly interesting is the moderate expression in several monoaminergic cell groups, namely the dorsal raphe, the locus coeruleus, and the ventral tegmental area.

The protein resides in the endomembrane system. It localises to the endoplasmic reticulum membrane. It is found in the cell membrane. Its activity is regulated as follows. Activated by SEP-363856 small molecule: IHCH-7179 acts both as an agonist activator for HTR1A and TAAR1. In terms of biological role, intracellular G-protein coupled receptor for trace amines, which recognizes endogenous amine-containing metabolites such as beta-phenylethylamine (beta-PEA), 3-iodothyronamine (T1AM), isoamylamine (IAA), cadaverine (CAD), cyclohexylamine (CHA), p-tyramine (p-TYR), trimethylamine (TMA), octopamine and tryptamine. Also functions as a receptor for various drugs and psychoactive substances, such as amphetamine and methamphetamine. Unresponsive to classical biogenic amines, such as epinephrine and histamine and only partially activated by dopamine and serotonin. Expressed in both the central and peripheral nervous system: TAAR1 activation regulates the activity of several neurotransmitter signaling pathways by (1) decreasing the basal firing rates of the neurons involved and by (2) lowering the sensitivity of receptors to neurotransmitters. Ligand binding causes a conformation change that triggers signaling via guanine nucleotide-binding proteins (G proteins) and modulates the activity of downstream effectors. TAAR1 is coupled with different G(i)/G(o)-, G(s)- or G(q)/G(11) classes of G alpha proteins depending on the ligand. CAD-binding is coupled to G(i)/G(o) G alpha proteins and mediates inhibition of adenylate cyclase activity. T1AM- or beta-PEA-binding is coupled to G(s) G alpha proteins and mediates activation of adenylate cyclase activity. CHA- or IAA-binding is coupled to G(q)/G(11) G alpha proteins and activates phospholipase C-beta, releasing diacylglycerol (DAG) and inositol 1,4,5-trisphosphate (IP3) second messengers. TMA-binding is coupled with all three G(i)/G(o)-, G(s)- or G(q)/G(11) G alpha protein subtypes. The protein is Trace amine-associated receptor 1 of Mus musculus (Mouse).